A 396-amino-acid chain; its full sequence is Na(+)/H(+) antiporter NhaA 1 (396 aa).

12 consecutive transmembrane segments (helical) span residues 9–29, 59–79, 95–115, 125–145, 154–174, 177–197, 200–220, 223–243, 260–280, 281–301, 332–352, and 373–393; these read LHNEAASGVLIFLAAVAAMLI, LLLWINDGLMAVFFLLVGLEL, VLPVVGAVGGIVGPALIYVMF, GWAVPTATDIAFAMGVLALLG, LFLLTLAIIDDLVAIVIIAIF, SDLSVGSLTVAGGAIALLFLL, IGVKGIAPYVLVGMVLWVAVL, GVHATLAGVVLAMAIPIKGET, VVGLVILPLFAFANAGVSLAG, LGLNVLLEPVAMGIGLGLLLG, GVALLCGIGFTMSLFISSLAF, and ILSGSLVSGVLGYLVLRFSLA.

The protein belongs to the NhaA Na(+)/H(+) (TC 2.A.33) antiporter family.

The protein localises to the cell inner membrane. It carries out the reaction Na(+)(in) + 2 H(+)(out) = Na(+)(out) + 2 H(+)(in). Na(+)/H(+) antiporter that extrudes sodium in exchange for external protons. In Magnetococcus marinus (strain ATCC BAA-1437 / JCM 17883 / MC-1), this protein is Na(+)/H(+) antiporter NhaA 1.